The primary structure comprises 602 residues: Sodium- and chloride-dependent GABA transporter 2 (602 aa).

The Cytoplasmic portion of the chain corresponds to 1-40 (MDSRVSGTTSNGETKPVCPGLEKAAEDGALQREQWSNKME). 3 helical membrane-spanning segments follow: residues 41 to 61 (FLLS…FPYL), 68 to 88 (GAFF…VFLL), and 121 to 141 (IVTL…FYLF). Over 142-206 (SSFTIDLPWG…GIQHLGALRW (65 aa)) the chain is Extracellular. A disulfide bridge links C153 with C162. N169 and N173 each carry an N-linked (GlcNAc...) asparagine glycan. 2 consecutive transmembrane segments (helical) span residues 207 to 227 (ELAL…WKGV) and 233 to 253 (VVYF…IRGV). N-linked (GlcNAc...) asparagine glycosylation occurs at N269. The next 7 helical transmembrane spans lie at 282 to 302 (AGTQ…ALGS), 319 to 339 (FLNS…LGFM), 366 to 386 (VVML…VVLL), 418 to 438 (VLIL…LTEG), 453 to 473 (GMCL…AYGA), 490 to 510 (PLIK…TFLF), and 528 to 548 (WWGD…IPAW). The Cytoplasmic segment spans residues 549-602 (SCYKLSTLKGSFRERVRQLLCPAKDLPQGHREGPSAPATPRTSLLILTELEPHH). T587 is subject to Phosphothreonine. A Phosphoserine modification is found at S591.

It belongs to the sodium:neurotransmitter symporter (SNF) (TC 2.A.22) family. SLC6A13 subfamily.

The protein localises to the cell membrane. It is found in the basolateral cell membrane. It catalyses the reaction 4-aminobutanoate(out) + chloride(out) + 2 Na(+)(out) = 4-aminobutanoate(in) + chloride(in) + 2 Na(+)(in). The catalysed reaction is taurine(out) + chloride(out) + 2 Na(+)(out) = taurine(in) + chloride(in) + 2 Na(+)(in). The enzyme catalyses beta-alanine(out) + chloride(out) + 2 Na(+)(out) = beta-alanine(in) + chloride(in) + 2 Na(+)(in). It carries out the reaction hypotaurine(out) + chloride(out) + 2 Na(+)(out) = hypotaurine(in) + chloride(in) + 2 Na(+)(in). Mediates sodium- and chloride-dependent transport of gamma-aminobutyric acid (GABA). Can also mediate transport of beta-alanine, taurine and hypotaurine. This is Sodium- and chloride-dependent GABA transporter 2 (SLC6A13) from Bos taurus (Bovine).